A 312-amino-acid polypeptide reads, in one-letter code: Olfactory receptor 2L3 (312 aa).

The Extracellular portion of the chain corresponds to 1–24 (MENYNQTSTDFILLGFFPPSRIGL). An N-linked (GlcNAc...) asparagine glycan is attached at Asn-5. A helical transmembrane segment spans residues 25-48 (FLFILIVFIFLMALIGNLSMILLI). The Cytoplasmic portion of the chain corresponds to 49 to 56 (FLDTHLHT). Residues 57–78 (PMYFLLSQLSLIDLNYISTIVP) form a helical membrane-spanning segment. The Extracellular portion of the chain corresponds to 79–99 (KMASDFLSGNKSISFTGCGIQ). Asn-88 carries an N-linked (GlcNAc...) asparagine glycan. A disulfide bridge links Cys-96 with Cys-188. The helical transmembrane segment at 100 to 119 (SFFFSALGGAEALLLASMAY) threads the bilayer. Over 120–138 (DRYIAICFPLHYPIRMSKR) the chain is Cytoplasmic. The helical transmembrane segment at 139–157 (MCVLMITGSWIIGSINACA) threads the bilayer. Residues 158-194 (HTVYVLHIPYCQSRAINHFFCDVPAMVTLACMDTWVY) lie on the Extracellular side of the membrane. A helical membrane pass occupies residues 195-218 (EGTVFLSTTIFLVFPFIAISCSYG). Residues 219 to 235 (RVLLAVYHMKSAEGRKK) are Cytoplasmic-facing. The chain crosses the membrane as a helical span at residues 236-258 (AYLTCSTHLTVVTFYYAPFVYTY). Topologically, residues 259-271 (LRPRSLRSPTEDK) are extracellular. The helical transmembrane segment at 272–291 (VLAVFYTTLTPMLNPIIYSL) threads the bilayer. The Cytoplasmic portion of the chain corresponds to 292-312 (RNKEVMGALTRVSQRICSGKM).

Belongs to the G-protein coupled receptor 1 family.

It localises to the cell membrane. In terms of biological role, odorant receptor. The protein is Olfactory receptor 2L3 (OR2L3) of Homo sapiens (Human).